Here is a 921-residue protein sequence, read N- to C-terminus: uncharacterized protein (921 aa).

The kinase-like stretch occupies residues 334 to 628 (MTKRKFLSID…NLKSIYYDFF (295 aa)). Residues 401–494 (GSSEWSFGSS…NNNNSDGSSG (94 aa)) are compositionally biased toward low complexity. Disordered regions lie at residues 401 to 499 (GSSE…DNRN) and 664 to 711 (NLYS…NSNS).

This is an uncharacterized protein from Dictyostelium discoideum (Social amoeba).